A 243-amino-acid chain; its full sequence is Pleckstrin homology domain-containing family B member 1 (243 aa).

A PH domain is found at 21–128; sequence ALVRGGWLWR…WKTALMEANS (108 aa).

In terms of assembly, binds transducins. Homodimer. Interacts (via PH domain) with MYO1C. Interacts (via PH domain) with MYO7A. Highly expressed in retina and brain. In retina, abundantly expressed in photoreceptors. Isoform 4 is the predominant isoform expressed in mature olfactory receptor neurons and vestibular and cochlear hair cells. Also expressed in cells with possible sensory function, including peripheral retinal ganglion cells, cochlear interdental cells, and neurons of the circumventricular organ (at protein level).

Its subcellular location is the membrane. The protein resides in the cytoplasm. This chain is Pleckstrin homology domain-containing family B member 1 (Plekhb1), found in Mus musculus (Mouse).